Reading from the N-terminus, the 208-residue chain is MCRGNLYIISAPSGAGKSSLISALLERDKNDSMTVSISHTTRSPRPGEIDGVHYHFVSHEKFEQLILENSFLEYAKVFGGNYYGTSLLNIEKNLAAGIDVFLDIDWQGARQIREKRPDVKSIFILPPSISALEKRLIGRGQDSQDIIAKRMEKAADEISHYDEYDYVIINADFDQALVDLEHILRAERLTVNYQKTQNAALIHQLLVK.

Residues 4 to 185 (GNLYIISAPS…ALVDLEHILR (182 aa)) form the Guanylate kinase-like domain. 11-18 (APSGAGKS) serves as a coordination point for ATP.

The protein belongs to the guanylate kinase family.

The protein resides in the cytoplasm. It carries out the reaction GMP + ATP = GDP + ADP. In terms of biological role, essential for recycling GMP and indirectly, cGMP. The chain is Guanylate kinase from Histophilus somni (strain 129Pt) (Haemophilus somnus).